Reading from the N-terminus, the 1848-residue chain is Histone-lysine N-methyltransferase, H3 lysine-79 specific (1848 aa).

In terms of domain architecture, DOT1 spans 19 to 336 (DVISFAWPLQ…ILERYFQRLK (318 aa)). Residues 142 to 145 (YGET), 165 to 174 (FIDLGSGVGQ), Glu-192, and 228 to 229 (DF) contribute to the S-adenosyl-L-methionine site. 14 disordered regions span residues 338-537 (KGGN…TRKA), 558-593 (AVSV…ARGR), 886-908 (LNSV…WPEV), 960-996 (PPPA…QMTL), 1033-1075 (LNED…AQSL), 1165-1190 (HMAS…RSSV), 1221-1333 (QRQQ…TQVS), 1345-1374 (QEKL…KTIG), 1432-1463 (VHVR…GGAA), 1486-1508 (ARAN…GRDY), 1529-1559 (EQQQ…PPLE), 1573-1604 (KYKE…LPTH), 1637-1713 (SPLA…VDPP), and 1731-1757 (QLSH…LQLT). Basic and acidic residues predominate over residues 339–360 (GGNDHESVGTVRTTRDRAKREA). Over residues 364–373 (QHHHNNHHSN) the composition is skewed to basic residues. The span at 391-405 (ATATAAHQQRHQSQS) shows a compositional bias: low complexity. Residues 419-428 (SGQQAASKTR) show a composition bias toward polar residues. Low complexity-rich tracts occupy residues 429 to 439 (QQLQHQHNQQQ) and 453 to 474 (DATN…ASNG). A phosphoserine mark is found at Ser-491, Ser-492, and Ser-494. Over residues 507-518 (GSNGGSIGGGSV) the composition is skewed to gly residues. 2 stretches are compositionally biased toward basic residues: residues 526 to 535 (TQKKRKKLTR) and 582 to 593 (RKGRMKKGARGR). The span at 1221–1235 (QRQQMRVEEQQQQQQ) shows a compositional bias: low complexity. Residues 1236–1263 (HQHHHHHHHHHPQHRLPQHVQHQHPHQH) are compositionally biased toward basic residues. Over residues 1289–1300 (EPPQTQPLELLP) the composition is skewed to low complexity. Phosphoserine occurs at positions 1318, 1324, and 1325. Residues 1532 to 1545 (QKQSKGAGSAGSSS) are compositionally biased toward low complexity. Positions 1574–1583 (YKEETEERQR) are enriched in basic and acidic residues. 2 stretches are compositionally biased toward low complexity: residues 1585-1598 (AAAA…PPAG) and 1681-1696 (HDAT…SSSS). The segment covering 1697–1706 (CGRRSNSNNG) has biased composition (polar residues).

This sequence belongs to the class I-like SAM-binding methyltransferase superfamily. DOT1 family. In terms of tissue distribution, broadly expressed in most tissues. Expressed in a large subset of neurons and in a small subset of glial cells.

It is found in the nucleus. It carries out the reaction L-lysyl(79)-[histone H3] + 3 S-adenosyl-L-methionine = N(6),N(6),N(6)-trimethyl-L-lysyl(79)-[histone H3] + 3 S-adenosyl-L-homocysteine + 3 H(+). In terms of biological role, histone methyltransferase. Methylates 'Lys-79' of histone H3. Required for Polycomb Group (PcG) and trithorax Group (trxG) maintenance of expression. Also involved in telomeric silencing but do not in centric heterochromatin. Probably participates in pairing sensitivity. This Drosophila melanogaster (Fruit fly) protein is Histone-lysine N-methyltransferase, H3 lysine-79 specific (gpp).